The sequence spans 423 residues: Growth hormone-releasing hormone receptor (423 aa).

An N-terminal signal peptide occupies residues 1–22; the sequence is MDGLMWATRILCLLSLCGVTLG. Residues 23 to 130 lie on the Extracellular side of the membrane; sequence HLHLECDFIT…KEKSYFSTVK (108 aa). Disulfide bonds link cysteine 41/cysteine 64, cysteine 55/cysteine 96, and cysteine 78/cysteine 112. N-linked (GlcNAc...) asparagine glycans are attached at residues asparagine 49 and asparagine 50. Residues 131 to 151 form a helical membrane-spanning segment; sequence IIYTTGHSISIVALCVAIAIL. At 152–167 the chain is on the cytoplasmic side; that stretch reads VALRRLHCPRNYIHTQ. The chain crosses the membrane as a helical span at residues 168 to 188; sequence LFATFILKASAVFLKDAAIFQ. At 189 to 210 the chain is on the extracellular side; it reads GDSTDHCSMSTVLCKVSVAISH. A helical transmembrane segment spans residues 211–231; sequence LATMTNFSWLLAEAVYLSCLL. The Cytoplasmic segment spans residues 232 to 240; it reads ASTSPRSKP. The helical transmembrane segment at 241-261 threads the bilayer; the sequence is AFWWLVLAGWGLPVLCTGTWV. Over 262-283 the chain is Extracellular; it reads GCKLAFEDTECWDLDNSSPCWW. Residues 284 to 304 form a helical membrane-spanning segment; that stretch reads IIKGPIVLSVGVNFGLFLNII. The Cytoplasmic segment spans residues 305–331; it reads CILLRKLEPAQGGLHTRAQYWRLSKST. Residues 332-352 traverse the membrane as a helical segment; the sequence is LLLIPLFGIHYIIFNFLPDSA. Residues 353–357 lie on the Extracellular side of the membrane; that stretch reads GLDIR. Residues 358–378 form a helical membrane-spanning segment; sequence VPLELGLGSFQGFIVAVLYCF. Over 379–423 the chain is Cytoplasmic; it reads LNQEVRTEISRKWYGHDPELLPARRTCTEWTTPPRSRLKVLTSEC.

This sequence belongs to the G-protein coupled receptor 2 family. In terms of tissue distribution, pituitary gland.

It is found in the cell membrane. Receptor for GRF, coupled to G proteins which activate adenylyl cyclase. Stimulates somatotroph cell growth, growth hormone gene transcription and growth hormone secretion. This chain is Growth hormone-releasing hormone receptor (Ghrhr), found in Mus musculus (Mouse).